Consider the following 296-residue polypeptide: Protoheme IX farnesyltransferase (296 aa).

A run of 9 helical transmembrane segments spans residues 9-29 (VTKPGIIFGNLISVIGGFLLA), 36-56 (YPLFLSTLLGVSLVVASGCVF), 75-95 (VLVKGLIDPKVSLIYASVLGI), 99-119 (LLLYVAANALAMMLAVIGFVI), 133-153 (VYGTLIGSLSGAAPPVIGYCA), 163-183 (LILLLIFSLWQMPHSYAIAIF), 209-229 (ITLYILAFMVATLMLTLSGYA), 234-254 (LVVAAAVSVWWLGMALRGYKA), and 265-285 (FVFSIIAITSLSVMMSVDFNV).

It belongs to the UbiA prenyltransferase family. Protoheme IX farnesyltransferase subfamily.

Its subcellular location is the cell inner membrane. The enzyme catalyses heme b + (2E,6E)-farnesyl diphosphate + H2O = Fe(II)-heme o + diphosphate. It participates in porphyrin-containing compound metabolism; heme O biosynthesis; heme O from protoheme: step 1/1. Converts heme B (protoheme IX) to heme O by substitution of the vinyl group on carbon 2 of heme B porphyrin ring with a hydroxyethyl farnesyl side group. In Yersinia pestis bv. Antiqua (strain Antiqua), this protein is Protoheme IX farnesyltransferase.